We begin with the raw amino-acid sequence, 417 residues long: Sulfate adenylyltransferase (417 aa).

The protein belongs to the sulfate adenylyltransferase family.

It catalyses the reaction sulfate + ATP + H(+) = adenosine 5'-phosphosulfate + diphosphate. It functions in the pathway sulfur metabolism; hydrogen sulfide biosynthesis; sulfite from sulfate: step 1/3. This is Sulfate adenylyltransferase from Psychrobacter cryohalolentis (strain ATCC BAA-1226 / DSM 17306 / VKM B-2378 / K5).